We begin with the raw amino-acid sequence, 21 residues long: Antimicrobial peptide scolopin-1 (21 aa).

In terms of tissue distribution, expressed by the venom gland.

It localises to the secreted. Functionally, antimicrobial peptide against both Gram-positive, -negative and yeast. Also induces histamine release by mast cells and shows moderate hemolytic activities against both human and rabbit red cells. In Scolopendra mutilans (Chinese red-headed centipede), this protein is Antimicrobial peptide scolopin-1.